A 148-amino-acid chain; its full sequence is 3-hydroxyacyl-[acyl-carrier-protein] dehydratase FabZ (148 aa).

The active site involves His55.

It belongs to the thioester dehydratase family. FabZ subfamily.

The protein resides in the cytoplasm. It carries out the reaction a (3R)-hydroxyacyl-[ACP] = a (2E)-enoyl-[ACP] + H2O. Involved in unsaturated fatty acids biosynthesis. Catalyzes the dehydration of short chain beta-hydroxyacyl-ACPs and long chain saturated and unsaturated beta-hydroxyacyl-ACPs. This Haemophilus influenzae (strain 86-028NP) protein is 3-hydroxyacyl-[acyl-carrier-protein] dehydratase FabZ.